A 396-amino-acid chain; its full sequence is Ribosomal RNA small subunit methyltransferase H (396 aa).

S-adenosyl-L-methionine is bound by residues 101-103 (GGH), Asp120, Tyr147, Asp171, and Gln178.

The protein belongs to the methyltransferase superfamily. RsmH family.

Its subcellular location is the cytoplasm. It catalyses the reaction cytidine(1402) in 16S rRNA + S-adenosyl-L-methionine = N(4)-methylcytidine(1402) in 16S rRNA + S-adenosyl-L-homocysteine + H(+). Specifically methylates the N4 position of cytidine in position 1402 (C1402) of 16S rRNA. This Mycobacterium bovis (strain ATCC BAA-935 / AF2122/97) protein is Ribosomal RNA small subunit methyltransferase H.